The primary structure comprises 67 residues: Medusin-S1 (67 aa).

The N-terminal stretch at 1 to 22 (MSFLKKSLFLVLFLGFVSLSIC) is a signal peptide. Positions 23 to 48 (EEEKRETEEKENEQEDDREERSEEKR) are excised as a propeptide. Residues 26–47 (KRETEEKENEQEDDREERSEEK) are disordered. Residues 31–40 (EKENEQEDDR) show a composition bias toward acidic residues. At Leu-66 the chain carries Leucine amide.

This sequence belongs to the frog skin active peptide (FSAP) family. Medusin subfamily. Expressed by the skin glands.

The protein resides in the secreted. The protein localises to the target cell membrane. Functionally, antibacterial peptide with moderate activity against the Gram-positive bacteria (S.aureus ATCC 25923, MIC=25 uM), but not against all other bacteria (both Gram-positive and Gram-negative) tested. Does not show activity against fungi, and against Leishmania species. It adopts an alpha-helical structure with very low amphipathicity in membrane environments. This is Medusin-S1 from Phyllomedusa sauvagei (Sauvage's leaf frog).